The sequence spans 131 residues: uncharacterized protein (131 aa).

In terms of domain architecture, MSP spans 14 to 130; the sequence is FLLIYSSLEV…RRLPASFLST (117 aa).

This is an uncharacterized protein from Caenorhabditis elegans.